Here is a 100-residue protein sequence, read N- to C-terminus: Large ribosomal subunit protein uL23 (100 aa).

This sequence belongs to the universal ribosomal protein uL23 family. Part of the 50S ribosomal subunit. Contacts protein L29, and trigger factor when it is bound to the ribosome.

Functionally, one of the early assembly proteins it binds 23S rRNA. One of the proteins that surrounds the polypeptide exit tunnel on the outside of the ribosome. Forms the main docking site for trigger factor binding to the ribosome. This Edwardsiella ictaluri (strain 93-146) protein is Large ribosomal subunit protein uL23.